Reading from the N-terminus, the 109-residue chain is DNA-binding protein MJ0691 (109 aa).

This sequence belongs to the PDCD5 family.

This is DNA-binding protein MJ0691 from Methanocaldococcus jannaschii (strain ATCC 43067 / DSM 2661 / JAL-1 / JCM 10045 / NBRC 100440) (Methanococcus jannaschii).